Reading from the N-terminus, the 183-residue chain is ATP synthase subunit delta (183 aa).

Belongs to the ATPase delta chain family. As to quaternary structure, F-type ATPases have 2 components, F(1) - the catalytic core - and F(0) - the membrane proton channel. F(1) has five subunits: alpha(3), beta(3), gamma(1), delta(1), epsilon(1). F(0) has three main subunits: a(1), b(2) and c(10-14). The alpha and beta chains form an alternating ring which encloses part of the gamma chain. F(1) is attached to F(0) by a central stalk formed by the gamma and epsilon chains, while a peripheral stalk is formed by the delta and b chains.

It is found in the cell inner membrane. Functionally, f(1)F(0) ATP synthase produces ATP from ADP in the presence of a proton or sodium gradient. F-type ATPases consist of two structural domains, F(1) containing the extramembraneous catalytic core and F(0) containing the membrane proton channel, linked together by a central stalk and a peripheral stalk. During catalysis, ATP synthesis in the catalytic domain of F(1) is coupled via a rotary mechanism of the central stalk subunits to proton translocation. Its function is as follows. This protein is part of the stalk that links CF(0) to CF(1). It either transmits conformational changes from CF(0) to CF(1) or is implicated in proton conduction. The protein is ATP synthase subunit delta of Vesicomyosocius okutanii subsp. Calyptogena okutanii (strain HA).